The primary structure comprises 356 residues: Nicotinate-nucleotide--dimethylbenzimidazole phosphoribosyltransferase (356 aa).

Residue E317 is the Proton acceptor of the active site.

Belongs to the CobT family. As to quaternary structure, homodimer.

The enzyme catalyses 5,6-dimethylbenzimidazole + nicotinate beta-D-ribonucleotide = alpha-ribazole 5'-phosphate + nicotinate + H(+). It participates in nucleoside biosynthesis; alpha-ribazole biosynthesis; alpha-ribazole from 5,6-dimethylbenzimidazole: step 1/2. In terms of biological role, catalyzes the synthesis of alpha-ribazole-5'-phosphate from nicotinate mononucleotide (NAMN) and 5,6-dimethylbenzimidazole (DMB). The sequence is that of Nicotinate-nucleotide--dimethylbenzimidazole phosphoribosyltransferase from Salmonella typhi.